Here is a 247-residue protein sequence, read N- to C-terminus: Geranylgeranylglyceryl phosphate synthase (247 aa).

Positions 23 and 52 each coordinate Mg(2+). Sn-glycerol 1-phosphate contacts are provided by residues 171–177 (YLEAGSG), 203–204 (GG), and 225–226 (GT).

The protein belongs to the GGGP/HepGP synthase family. Group II subfamily. Requires Mg(2+) as cofactor.

It localises to the cytoplasm. The catalysed reaction is sn-glycerol 1-phosphate + (2E,6E,10E)-geranylgeranyl diphosphate = sn-3-O-(geranylgeranyl)glycerol 1-phosphate + diphosphate. Its pathway is membrane lipid metabolism; glycerophospholipid metabolism. Functionally, prenyltransferase that catalyzes the transfer of the geranylgeranyl moiety of geranylgeranyl diphosphate (GGPP) to the C3 hydroxyl of sn-glycerol-1-phosphate (G1P). This reaction is the first ether-bond-formation step in the biosynthesis of archaeal membrane lipids. This Methanosarcina barkeri (strain Fusaro / DSM 804) protein is Geranylgeranylglyceryl phosphate synthase.